A 242-amino-acid polypeptide reads, in one-letter code: Transcriptional regulatory protein GltR (242 aa).

In terms of domain architecture, Response regulatory spans 7–123 (SILLVDDDQE…ELLARIKALL (117 aa)). The residue at position 56 (D56) is a 4-aspartylphosphate. A DNA-binding region (ompR/PhoB-type) is located at residues 134–234 (GDVLAFEDWR…VRGSGYLLAA (101 aa)).

In terms of processing, phosphorylated by GtrS.

Its subcellular location is the cytoplasm. Its activity is regulated as follows. Phosphorylation of GltR induces its dissociation from DNA leading to transcriptional activation. Functionally, member of the two-component regulatory system GtrS/GltR involved in the regulation of glucose metabolism and transport, as well as regulation of the exotoxin A gene expression. GltR controls the transcription of genes involved in glucose metabolism (glk and edd/gap-1) and transport (oprB) as well as the expression of toxA that encodes exotoxin A, the primary virulence factor. Acts as a repressor that is released from its target operators upon phosphorylation. Its function is as follows. Contributes to modulation of the type III secretion system (T3SS) in response to host cells via the regulation of the OprB transport system. This is Transcriptional regulatory protein GltR from Pseudomonas aeruginosa (strain ATCC 15692 / DSM 22644 / CIP 104116 / JCM 14847 / LMG 12228 / 1C / PRS 101 / PAO1).